Here is a 361-residue protein sequence, read N- to C-terminus: Mannose-1-phosphate guanyltransferase (361 aa).

It belongs to the transferase hexapeptide repeat family.

It localises to the cytoplasm. It catalyses the reaction alpha-D-mannose 1-phosphate + GTP + H(+) = GDP-alpha-D-mannose + diphosphate. The protein operates within nucleotide-sugar biosynthesis; GDP-alpha-D-mannose biosynthesis; GDP-alpha-D-mannose from alpha-D-mannose 1-phosphate (GTP route): step 1/1. In terms of biological role, involved in cell wall synthesis where it is required for glycosylation. Involved in cell cycle progression through cell-size checkpoint. This chain is Mannose-1-phosphate guanyltransferase (MPG1), found in Eremothecium gossypii (strain ATCC 10895 / CBS 109.51 / FGSC 9923 / NRRL Y-1056) (Yeast).